Reading from the N-terminus, the 319-residue chain is Methionyl-tRNA formyltransferase (319 aa).

113–116 (SLLP) serves as a coordination point for (6S)-5,6,7,8-tetrahydrofolate.

This sequence belongs to the Fmt family.

It catalyses the reaction L-methionyl-tRNA(fMet) + (6R)-10-formyltetrahydrofolate = N-formyl-L-methionyl-tRNA(fMet) + (6S)-5,6,7,8-tetrahydrofolate + H(+). Attaches a formyl group to the free amino group of methionyl-tRNA(fMet). The formyl group appears to play a dual role in the initiator identity of N-formylmethionyl-tRNA by promoting its recognition by IF2 and preventing the misappropriation of this tRNA by the elongation apparatus. This Hamiltonella defensa subsp. Acyrthosiphon pisum (strain 5AT) protein is Methionyl-tRNA formyltransferase.